A 466-amino-acid polypeptide reads, in one-letter code: Argininosuccinate lyase (466 aa).

The protein belongs to the lyase 1 family. Argininosuccinate lyase subfamily.

It localises to the cytoplasm. It catalyses the reaction 2-(N(omega)-L-arginino)succinate = fumarate + L-arginine. Its pathway is amino-acid biosynthesis; L-arginine biosynthesis; L-arginine from L-ornithine and carbamoyl phosphate: step 3/3. This is Argininosuccinate lyase from Bartonella bacilliformis (strain ATCC 35685 / KC583 / Herrer 020/F12,63).